We begin with the raw amino-acid sequence, 216 residues long: uncharacterized protein (216 aa).

4Fe-4S ferredoxin-type domains are found at residues 160 to 189 (DDKP…IDEK) and 188 to 216 (EKPK…ALLP). [4Fe-4S] cluster-binding residues include cysteine 169, cysteine 172, cysteine 175, cysteine 179, cysteine 197, cysteine 200, cysteine 203, and cysteine 207.

The protein belongs to the FrhG family.

This is an uncharacterized protein from Methanocaldococcus jannaschii (strain ATCC 43067 / DSM 2661 / JAL-1 / JCM 10045 / NBRC 100440) (Methanococcus jannaschii).